The following is a 291-amino-acid chain: Elongation factor Ts, mitochondrial (291 aa).

Belongs to the EF-Ts family.

Its subcellular location is the mitochondrion. Its function is as follows. Associates with the EF-Tu.GDP complex and induces the exchange of GDP to GTP. It remains bound to the aminoacyl-tRNA.EF-Tu.GTP complex up to the GTP hydrolysis stage on the ribosome. This is Elongation factor Ts, mitochondrial from Nematostella vectensis (Starlet sea anemone).